The sequence spans 485 residues: E3 ubiquitin-protein ligase TRIM58 (485 aa).

The RING-type zinc finger occupies Cys-15–Arg-59. The B box-type zinc-finger motif lies at Ala-90–Leu-131. Cys-95, His-98, Cys-117, and His-123 together coordinate Zn(2+). Residues Leu-192–Arg-241 adopt a coiled-coil conformation. A B30.2/SPRY domain is found at Asp-271–Gly-466.

It belongs to the TRIM/RBCC family. Expressed in erythroblasts.

The catalysed reaction is S-ubiquitinyl-[E2 ubiquitin-conjugating enzyme]-L-cysteine + [acceptor protein]-L-lysine = [E2 ubiquitin-conjugating enzyme]-L-cysteine + N(6)-ubiquitinyl-[acceptor protein]-L-lysine.. It participates in protein modification; protein ubiquitination. Functionally, E3 ubiquitin ligase induced during late erythropoiesis. Directly binds and ubiquitinates the intermediate chain of the microtubule motor dynein (DYNC1LI1/DYNC1LI2), stimulating the degradation of the dynein holoprotein complex. May participate in the erythroblast enucleation process through regulation of nuclear polarization. The protein is E3 ubiquitin-protein ligase TRIM58 (Trim58) of Mus musculus (Mouse).